The sequence spans 358 residues: UDP-N-acetylglucosamine--N-acetylmuramyl-(pentapeptide) pyrophosphoryl-undecaprenol N-acetylglucosamine transferase (358 aa).

UDP-N-acetyl-alpha-D-glucosamine is bound by residues Thr11–Gly13, Arg163, Ser191, Ile245, and Gln290.

Belongs to the glycosyltransferase 28 family. MurG subfamily.

It localises to the cell inner membrane. It carries out the reaction di-trans,octa-cis-undecaprenyl diphospho-N-acetyl-alpha-D-muramoyl-L-alanyl-D-glutamyl-meso-2,6-diaminopimeloyl-D-alanyl-D-alanine + UDP-N-acetyl-alpha-D-glucosamine = di-trans,octa-cis-undecaprenyl diphospho-[N-acetyl-alpha-D-glucosaminyl-(1-&gt;4)]-N-acetyl-alpha-D-muramoyl-L-alanyl-D-glutamyl-meso-2,6-diaminopimeloyl-D-alanyl-D-alanine + UDP + H(+). The protein operates within cell wall biogenesis; peptidoglycan biosynthesis. Its function is as follows. Cell wall formation. Catalyzes the transfer of a GlcNAc subunit on undecaprenyl-pyrophosphoryl-MurNAc-pentapeptide (lipid intermediate I) to form undecaprenyl-pyrophosphoryl-MurNAc-(pentapeptide)GlcNAc (lipid intermediate II). In Herminiimonas arsenicoxydans, this protein is UDP-N-acetylglucosamine--N-acetylmuramyl-(pentapeptide) pyrophosphoryl-undecaprenol N-acetylglucosamine transferase.